A 298-amino-acid chain; its full sequence is Tyrosine recombinase XerC (298 aa).

The 87-residue stretch at 2 to 88 (TDLHTDVERY…ALRSFFDWLV (87 aa)) folds into the Core-binding (CB) domain. The 180-residue stretch at 109–288 (HLPKNIDVDD…DFQHLASVYD (180 aa)) folds into the Tyr recombinase domain. Catalysis depends on residues arginine 148, lysine 172, histidine 240, arginine 243, and histidine 266. The O-(3'-phospho-DNA)-tyrosine intermediate role is filled by tyrosine 275.

Belongs to the 'phage' integrase family. XerC subfamily. As to quaternary structure, forms a cyclic heterotetrameric complex composed of two molecules of XerC and two molecules of XerD, in which XerC interacts with XerD via its C-terminal region, XerD interacts with XerC via its C-terminal region and so on.

It is found in the cytoplasm. FtsK may regulate the catalytic switch between XerC and XerD in the heterotetrameric complex during the two steps of the recombination process. In terms of biological role, site-specific tyrosine recombinase, which acts by catalyzing the cutting and rejoining of the recombining DNA molecules. Binds cooperatively to specific DNA consensus sequences that are separated from XerD binding sites by a short central region, forming the heterotetrameric XerC-XerD complex that recombines DNA substrates. The complex is essential to convert dimers of the bacterial chromosome into monomers to permit their segregation at cell division. It also contributes to the segregational stability of plasmids. In the complex XerC specifically exchanges the top DNA strands. The protein is Tyrosine recombinase XerC of Escherichia coli O45:K1 (strain S88 / ExPEC).